The sequence spans 407 residues: Growth/differentiation factor 11 (407 aa).

The first 24 residues, 1 to 24 (MVLAAPLLLGFLLLALELRPRGEA), serve as a signal peptide directing secretion. Positions 25–298 (AEGPAAAAAA…VLENTKRSRR (274 aa)) are excised as a propeptide. Asn-94 is a glycosylation site (N-linked (GlcNAc...) asparagine). 4 cysteine pairs are disulfide-bonded: Cys-304/Cys-314, Cys-313/Cys-372, Cys-341/Cys-404, and Cys-345/Cys-406.

It belongs to the TGF-beta family. Homodimer; disulfide-linked. Interacts directly with ACVR2B. Interacts directly with ACVR2A. Interacts with ACVR1B, TGFBR1 and ACVR1C in an ACVR2B-dependent manner. Interacts with FST isoform 2/FS-288. Synthesized as large precursor molecule that undergoes proteolytic cleavage by furin-like proteases. This produces an inactive form consisting of the mature C-terminal portion non-covalently bound to its cleaved N-terminal propeptide. Activation of the mature form requires additional cleavage of the propeptide by a tolloid-like metalloproteinase. In the embryo, strong expression is seen in the palatal epithelia, including the medial edge epithelial and midline epithelial seam of the palatal shelves. Less pronounced expression is also seen throughout the palatal shelf and tongue mesenchyme.

The protein localises to the secreted. Functionally, secreted signal that acts globally to regulate anterior/posterior axial patterning during development. May play critical roles in patterning both mesodermal and neural tissues. It is required for proper vertebral patterning and orofacial development. Signals through activin receptors type-2, ACVR2A and ACVR2B, and activin receptors type-1, ACVR1B, ACVR1C and TGFBR1 leading to the phosphorylation of SMAD2 and SMAD3. The sequence is that of Growth/differentiation factor 11 (GDF11) from Homo sapiens (Human).